Here is a 996-residue protein sequence, read N- to C-terminus: Alanine--tRNA ligase, chloroplastic/mitochondrial (996 aa).

Zn(2+)-binding residues include His677, His681, Cys779, and His783.

It belongs to the class-II aminoacyl-tRNA synthetase family. In terms of assembly, monomer. Zn(2+) serves as cofactor.

Its subcellular location is the plastid. The protein localises to the chloroplast. It is found in the mitochondrion. It carries out the reaction tRNA(Ala) + L-alanine + ATP = L-alanyl-tRNA(Ala) + AMP + diphosphate. Functionally, catalyzes the attachment of alanine to tRNA(Ala) in a two-step reaction: alanine is first activated by ATP to form Ala-AMP and then transferred to the acceptor end of tRNA(Ala). Also edits incorrectly charged tRNA(Ala) via its editing domain. This Oryza sativa subsp. japonica (Rice) protein is Alanine--tRNA ligase, chloroplastic/mitochondrial.